Here is a 1484-residue protein sequence, read N- to C-terminus: Chromatin remodeling regulator CECR2 (1484 aa).

The tract at residues 170 to 241 (VQGKSNGELS…RHGSQGPGQG (72 aa)) is disordered. Positions 197-209 (TGKRRGRPPKRKK) are enriched in basic residues. Residues 210–222 (LQEEILLSEKQEE) show a composition bias toward basic and acidic residues. Positions 223–234 (NSLASEPQTRHG) are enriched in polar residues. Phosphoserine is present on S422. A Bromo domain is found at 434-538 (FELDDDFTAM…RCFHRAMMKH (105 aa)). A Phosphothreonine modification is found at T546. Disordered stretches follow at residues 556–704 (EKRE…GPRL), 796–825 (GNHG…PRTL), 919–1053 (GVPY…SYPG), 1165–1259 (VMGG…LFSD), 1287–1320 (AKVP…LDLD), and 1442–1484 (YRPS…LDQS). Phosphoserine is present on S571. Positions 605–614 (SSGDDQSSSS) are enriched in low complexity. S1014 carries the phosphoserine modification. R1197 and R1203 each carry asymmetric dimethylarginine. Positions 1243-1254 (SGPPASQPPPPR) are enriched in pro residues. The segment covering 1304–1320 (DESMERPESPKEFLDLD) has biased composition (basic and acidic residues). S1312 is subject to Phosphoserine. Over residues 1451 to 1469 (PVQSQASFPKTPTAATSQE) the composition is skewed to polar residues. The segment covering 1474–1484 (HKPPTLPLDQS) has biased composition (pro residues).

As to quaternary structure, component of the CERF-1 ISWI chromatin remodeling complex (also called the CECR2-containing remodeling factor (CERF) complex) at least composed of CECR2 and SMARCA1. Component of the CERF-5 ISWI chromatin remodeling complex at least composed of SMARCA5/SNF2H and CECR2. LUZP1 is detected as part of the CERF-1 and CERF-5 complexes in embryonic stem (ES) cells where it is involved in complex stabilization but is not detected in the complexes in the testis. Interacts with CCAR2; CCAR2 may form part of the CERF-1 and/or CEF-5 ISWI chromatin remodeling complexes in ES cells. Interacts with acetylated lysine residues on histone H2A and H3 (in vitro). Interacts with LRPPRC. Highly expressed in skeletal muscle, thymus, placenta and lung. Expressed at lower level in brain, heart, colon, spleen, kidney.

It localises to the nucleus. Its function is as follows. Regulatory subunit of the ATP-dependent CERF-1 and CERF-5 ISWI chromatin remodeling complexes, which form ordered nucleosome arrays on chromatin and facilitate access to DNA during DNA-templated processes such as DNA replication, transcription, and repair. The complexes do not have the ability to slide mononucleosomes to the center of a DNA template. The CERF-1 ISWI chromatin remodeling complex has a lower ATP hydrolysis rate than the CERF-5 ISWI chromatin remodeling complex. Plays a role in various processes during development: required during embryogenesis for neural tube closure and inner ear development. In adults, required for spermatogenesis, via the formation of ISWI-type chromatin complexes. In histone-modifying complexes, CECR2 recognizes and binds acylated histones: binds histones that are acetylated and/or butyrylated. May also be involved through its interaction with LRPPRC in the integration of cytoskeletal network with vesicular trafficking, nucleocytosolic shuttling, transcription, chromosome remodeling and cytokinesis. The sequence is that of Chromatin remodeling regulator CECR2 (CECR2) from Homo sapiens (Human).